We begin with the raw amino-acid sequence, 385 residues long: ATP synthase subunit a-1 (385 aa).

Positions 1 to 133 (MRRIFLFDEN…ALNIVGQAAA (133 aa)) are excised as a propeptide. A run of 7 helical transmembrane segments spans residues 154 to 174 (FSFT…LLLI), 220 to 240 (FFPC…QGMI), 249 to 269 (HFLI…IVGF), 276 to 296 (FFSF…LVLL), 316 to 336 (MMAG…MLCM), 339 to 359 (IFYF…TGLE), and 362 to 382 (VAIL…NDAI).

The protein belongs to the ATPase A chain family. F-type ATPases have 2 components, CF(1) - the catalytic core - and CF(0) - the membrane proton channel. CF(1) has five subunits: alpha(3), beta(3), gamma(1), delta(1), epsilon(1). CF(0) has three main subunits: a, b and c.

It is found in the mitochondrion inner membrane. In terms of biological role, mitochondrial membrane ATP synthase (F(1)F(0) ATP synthase or Complex V) produces ATP from ADP in the presence of a proton gradient across the membrane which is generated by electron transport complexes of the respiratory chain. F-type ATPases consist of two structural domains, F(1) - containing the extramembraneous catalytic core and F(0) - containing the membrane proton channel, linked together by a central stalk and a peripheral stalk. During catalysis, ATP synthesis in the catalytic domain of F(1) is coupled via a rotary mechanism of the central stalk subunits to proton translocation. Key component of the proton channel; it may play a direct role in the translocation of protons across the membrane. The protein is ATP synthase subunit a-1 (ATP6-1) of Arabidopsis thaliana (Mouse-ear cress).